The chain runs to 74 residues: U3-agatoxin-Ao1b (74 aa).

An N-terminal signal peptide occupies residues Met-1–Ala-20. Residues Ile-21–Arg-34 constitute a propeptide that is removed on maturation. Disulfide bonds link Cys-37–Cys-53, Cys-44–Cys-58, Cys-52–Cys-68, and Cys-60–Cys-66. The residue at position 72 (Ser-72) is a Serine amide.

The protein belongs to the neurotoxin 07 (Beta/delta-agtx) family. 02 (aga-3) subfamily. As to expression, expressed by the venom gland.

The protein resides in the secreted. Insecticidal neurotoxin that induces an irreversible spastic paralysis when injected into insects. Modifies presynaptic voltage-gated sodium channels (Nav), causing them to open at the normal resting potential of the nerve. This leads to spontaneous release of neurotransmitter and repetitive action potentials in motor neurons. This is U3-agatoxin-Ao1b from Agelena orientalis (Funnel-web spider).